The sequence spans 205 residues: Outer-membrane lipoprotein LolB (205 aa).

An N-terminal signal peptide occupies residues 1–17; that stretch reads MFLRHFIVFSFIALLAG. Cys-18 carries N-palmitoyl cysteine lipidation. Cys-18 is lipidated: S-diacylglycerol cysteine.

It belongs to the LolB family. In terms of assembly, monomer.

It localises to the cell outer membrane. Functionally, plays a critical role in the incorporation of lipoproteins in the outer membrane after they are released by the LolA protein. In Pseudomonas fluorescens (strain ATCC BAA-477 / NRRL B-23932 / Pf-5), this protein is Outer-membrane lipoprotein LolB.